Here is a 479-residue protein sequence, read N- to C-terminus: Probable cytosol aminopeptidase (479 aa).

2 residues coordinate Mn(2+): lysine 251 and aspartate 256. Lysine 263 is a catalytic residue. Mn(2+) is bound by residues aspartate 274, aspartate 333, and glutamate 335. Residue arginine 337 is part of the active site.

This sequence belongs to the peptidase M17 family. Requires Mn(2+) as cofactor.

It localises to the cytoplasm. The catalysed reaction is Release of an N-terminal amino acid, Xaa-|-Yaa-, in which Xaa is preferably Leu, but may be other amino acids including Pro although not Arg or Lys, and Yaa may be Pro. Amino acid amides and methyl esters are also readily hydrolyzed, but rates on arylamides are exceedingly low.. It catalyses the reaction Release of an N-terminal amino acid, preferentially leucine, but not glutamic or aspartic acids.. Its function is as follows. Presumably involved in the processing and regular turnover of intracellular proteins. Catalyzes the removal of unsubstituted N-terminal amino acids from various peptides. This Albidiferax ferrireducens (strain ATCC BAA-621 / DSM 15236 / T118) (Rhodoferax ferrireducens) protein is Probable cytosol aminopeptidase.